Consider the following 172-residue polypeptide: RNA pyrophosphohydrolase (172 aa).

In terms of domain architecture, Nudix hydrolase spans 6 to 149 (GFRANVGIII…KRDVYRKVMK (144 aa)). The Nudix box motif lies at 38-59 (GGLDDGESVEEAMYRELYEEVG).

This sequence belongs to the Nudix hydrolase family. RppH subfamily. It depends on a divalent metal cation as a cofactor.

Accelerates the degradation of transcripts by removing pyrophosphate from the 5'-end of triphosphorylated RNA, leading to a more labile monophosphorylated state that can stimulate subsequent ribonuclease cleavage. The chain is RNA pyrophosphohydrolase from Shewanella frigidimarina (strain NCIMB 400).